The primary structure comprises 517 residues: Ribonuclease Y (517 aa).

Residues 1 to 21 form a helical membrane-spanning segment; the sequence is MIEVLIGLGAGVAGVGAGYLY. Residues 207–273 form the KH domain; that stretch reads LINVVNIKND…TRVIELLVED (67 aa). An HD domain is found at 333 to 426; sequence ALAHSLEVAH…VCAADCLSAA (94 aa).

Belongs to the RNase Y family.

The protein localises to the cell membrane. Endoribonuclease that initiates mRNA decay. This Campylobacter curvus (strain 525.92) protein is Ribonuclease Y.